The chain runs to 103 residues: G0/G1 switch protein 2 (103 aa).

As to quaternary structure, directly interacts with BCL2; this interaction prevents the formation of the anti-apoptotic BAX-BCL2 complex.

The protein localises to the mitochondrion. Functionally, promotes apoptosis by binding to BCL2, hence preventing the formation of protective BCL2-BAX heterodimers. The polypeptide is G0/G1 switch protein 2 (G0s2) (Rattus norvegicus (Rat)).